Reading from the N-terminus, the 104-residue chain is Large ribosomal subunit protein bL21 (104 aa).

It belongs to the bacterial ribosomal protein bL21 family. In terms of assembly, part of the 50S ribosomal subunit. Contacts protein L20.

Functionally, this protein binds to 23S rRNA in the presence of protein L20. The protein is Large ribosomal subunit protein bL21 of Clostridium botulinum (strain ATCC 19397 / Type A).